The chain runs to 364 residues: tRNA 2-selenouridine synthase (364 aa).

The 124-residue stretch at 14–137 folds into the Rhodanese domain; sequence LIADTPIIDV…LRQTAIQATI (124 aa). Catalysis depends on Cys97, which acts as the S-selanylcysteine intermediate.

The protein belongs to the SelU family. In terms of assembly, monomer.

The catalysed reaction is 5-methylaminomethyl-2-thiouridine(34) in tRNA + selenophosphate + (2E)-geranyl diphosphate + H2O + H(+) = 5-methylaminomethyl-2-selenouridine(34) in tRNA + (2E)-thiogeraniol + phosphate + diphosphate. It catalyses the reaction 5-methylaminomethyl-2-thiouridine(34) in tRNA + (2E)-geranyl diphosphate = 5-methylaminomethyl-S-(2E)-geranyl-thiouridine(34) in tRNA + diphosphate. It carries out the reaction 5-methylaminomethyl-S-(2E)-geranyl-thiouridine(34) in tRNA + selenophosphate + H(+) = 5-methylaminomethyl-2-(Se-phospho)selenouridine(34) in tRNA + (2E)-thiogeraniol. The enzyme catalyses 5-methylaminomethyl-2-(Se-phospho)selenouridine(34) in tRNA + H2O = 5-methylaminomethyl-2-selenouridine(34) in tRNA + phosphate. Functionally, involved in the post-transcriptional modification of the uridine at the wobble position (U34) of tRNA(Lys), tRNA(Glu) and tRNA(Gln). Catalyzes the conversion of 2-thiouridine (S2U-RNA) to 2-selenouridine (Se2U-RNA). Acts in a two-step process involving geranylation of 2-thiouridine (S2U) to S-geranyl-2-thiouridine (geS2U) and subsequent selenation of the latter derivative to 2-selenouridine (Se2U) in the tRNA chain. The sequence is that of tRNA 2-selenouridine synthase from Escherichia coli (strain SMS-3-5 / SECEC).